We begin with the raw amino-acid sequence, 669 residues long: MSKEIAKKRIEELRDLLNTFNYQYHVLDNPSVSDAEYDRNMQELIKLEAENPEFMSEDSPSIRVGGTVLDIFEKVTHKSPMLSLGNAFNEGDLRDFDRRVRQGIDDANVRYICELKIDGLAVSLHYEKGRFIQGATRGDGVTGEDITQNLKTIKAIPLRLNEEVTLEARGEAYMPKRSFVKLNEEKEQNGEDVFANPRNAAAGSIRQLDPKIAAKRNLSMFVYGLANVEEKTIPSHSESLDYLGELGFKTNPNRRTCETIEEVIAYVEEWQEKRPHLDYEIDGIVIKVDDVALQESLGTTAKSPRWAIAYKFPAEEVVTRLTGIELSVGRTGVVTPTAELEPVRVAGTIVRRASLHNEDLIREKDIRIGDYVVVKKAGDIIPEVVNVIFDKRTGGEEEYHMPTHCPACESELVRLEEEVALRCINPTCPAQIREGLIHFVSRNAMNIDGLGERVITQLFDADYIRTFADLYSLTKEQLLQLERFGEKSATNLVQAIENSKENSLERLLFGLGIRHVGAKAARTFAEHFETMDALVKATEEELKAINEIGEKMAQSVVAYFDNEDVLELLQQFKEYGVNMTYKGIKIADLQNVESYFAGKTVVLTGKLEVMGRSEAKKKIEALGGKVTGSVSKSTDLVVAGEAAGSKLAQAEKHNVEVWNEERFLQELNK.

Residues 34–38 (DAEYD), 83–84 (SL), and Glu114 each bind NAD(+). The N6-AMP-lysine intermediate role is filled by Lys116. Arg137, Glu171, Lys287, and Lys311 together coordinate NAD(+). Residues Cys405, Cys408, Cys423, and Cys428 each coordinate Zn(2+). A BRCT domain is found at 591–669 (NVESYFAGKT…EERFLQELNK (79 aa)).

It belongs to the NAD-dependent DNA ligase family. LigA subfamily. Mg(2+) is required as a cofactor. Requires Mn(2+) as cofactor.

The catalysed reaction is NAD(+) + (deoxyribonucleotide)n-3'-hydroxyl + 5'-phospho-(deoxyribonucleotide)m = (deoxyribonucleotide)n+m + AMP + beta-nicotinamide D-nucleotide.. DNA ligase that catalyzes the formation of phosphodiester linkages between 5'-phosphoryl and 3'-hydroxyl groups in double-stranded DNA using NAD as a coenzyme and as the energy source for the reaction. It is essential for DNA replication and repair of damaged DNA. The polypeptide is DNA ligase (Bacillus anthracis (strain A0248)).